Reading from the N-terminus, the 170-residue chain is Urease accessory protein UreE (170 aa).

It belongs to the UreE family.

The protein localises to the cytoplasm. Its function is as follows. Involved in urease metallocenter assembly. Binds nickel. Probably functions as a nickel donor during metallocenter assembly. The chain is Urease accessory protein UreE from Helicobacter pylori (strain HPAG1).